The following is an 869-amino-acid chain: Dynamin-3 (869 aa).

In terms of domain architecture, Dynamin-type G spans 28–294 (LLELPQIAVV…LTNHIRDTLP (267 aa)). The G1 motif stretch occupies residues 38 to 45 (GGQSAGKS). 38–46 (GGQSAGKSS) serves as a coordination point for GTP. The G2 motif stretch occupies residues 64-66 (VTR). The G3 motif stretch occupies residues 136 to 139 (DLPG). The tract at residues 205 to 208 (TKLD) is G4 motif. 205-211 (TKLDLMD) serves as a coordination point for GTP. A Phosphotyrosine modification is found at tyrosine 231. The segment at 235-238 (VNRS) is G5 motif. Position 236-239 (236-239 (NRSQ)) interacts with GTP. Lysine 299 is subject to N6-acetyllysine. The PH domain occupies 525–631 (IVIRKGWLTV…WKASLLRAGV (107 aa)). Tyrosine 603 carries the phosphotyrosine modification. N6-acetyllysine is present on lysine 604. In terms of domain architecture, GED spans 659 to 750 (VETIRNLVDS…IIGDINTVTV (92 aa)). Residues 752–869 (TPAPPPVDDS…IRPLESSLLD (118 aa)) are disordered. Phosphoserine occurs at positions 769 and 773. Over residues 775–796 (TTQRRLTLSAPLPRPASSRGPA) the composition is skewed to low complexity. Composition is skewed to pro residues over residues 797–822 (PAIP…PPFP) and 832–855 (PQVP…PSPT). Residue serine 853 is modified to Phosphoserine.

It belongs to the TRAFAC class dynamin-like GTPase superfamily. Dynamin/Fzo/YdjA family. In terms of tissue distribution, isoform-specific expression in germ-cell-depleted testis (Sertoli cells), brain (peripheral sensory neurons), lung and heart.

Its subcellular location is the cytoplasm. It localises to the cytoskeleton. The protein localises to the cytoplasmic vesicle. The protein resides in the golgi apparatus. It carries out the reaction GTP + H2O = GDP + phosphate + H(+). Its function is as follows. Microtubule-associated force-producing protein involved in producing microtubule bundles and able to bind and hydrolyze GTP. Most probably involved in vesicular trafficking processes, in particular endocytosis. The protein is Dynamin-3 (Dnm3) of Rattus norvegicus (Rat).